The sequence spans 281 residues: NAD-dependent protein deacetylase 3 (281 aa).

Residues 1–281 (MLDSPTLDLL…PWLAEQLITR (281 aa)) enclose the Deacetylase sirtuin-type domain. NAD(+) contacts are provided by residues 27 to 47 (GAGISTASGIPDYRDKDGVRR) and 105 to 108 (QNVD). The active-site Proton acceptor is histidine 123. Positions 131, 134, 182, and 185 each coordinate Zn(2+). NAD(+) contacts are provided by residues 223–225 (GTS), 249–251 (NHG), and cysteine 267.

The protein belongs to the sirtuin family. Class II subfamily. Requires Zn(2+) as cofactor.

It localises to the cytoplasm. The enzyme catalyses N(6)-acetyl-L-lysyl-[protein] + NAD(+) + H2O = 2''-O-acetyl-ADP-D-ribose + nicotinamide + L-lysyl-[protein]. NAD-dependent protein deacetylase which modulates the activities of several enzymes which are inactive in their acetylated form. The protein is NAD-dependent protein deacetylase 3 of Pseudomonas syringae pv. tomato (strain ATCC BAA-871 / DC3000).